The sequence spans 414 residues: Peptidoglycan beta-N-acetylmuramidase NamZ (414 aa).

The signal sequence occupies residues 1 to 23 (MRKTIFAFLTGLMMFGTITAASA).

The protein belongs to the glycoside hydrolase 171 family. Homodimer in solution.

The protein resides in the secreted. The catalysed reaction is Hydrolysis of terminal, non-reducing N-acetylmuramic residues.. Its function is as follows. Catalyzes the exo-lytic cleavage of beta-1,4-N-acetylmuramate (beta-1,4-MurNAc) from the non-reducing ends of peptidoglycan chains. Specifically hydrolyzes the natural, peptidoglycan-derived disaccharide MurNAc-GlcNAc and the artificial substrate para-nitrophenyl beta-N-acetylmuramic acid (pNP-MurNAc). Requires a MurNAc entity at the non-reducing end, and cannot cleave GlcNAc-MurNAc. Probably plays a role in cell wall turnover and recycling. This Bacillus subtilis (strain 168) protein is Peptidoglycan beta-N-acetylmuramidase NamZ.